The primary structure comprises 1318 residues: Tetratricopeptide repeat protein 41 (1318 aa).

TPR repeat units follow at residues 401–434 (PRLE…KPCI), 653–686 (WIQE…PVRE), 819–852 (GRII…LLQS), 860–893 (LRAQ…LLRF), 993–1029 (MEFL…KEKA), and 1047–1084 (SDTL…RAAH). Positions 1295–1318 (KPGFPRRSQIESKLLKTSDDPNKE) are disordered. Basic and acidic residues predominate over residues 1302-1318 (SQIESKLLKTSDDPNKE).

Highly expressed in lung and myeloid leukemia cell line (at protein level). Isoform 4: expressed in heart (at protein level).

It is found in the cytoplasm. The protein is Tetratricopeptide repeat protein 41 of Mus musculus (Mouse).